Here is a 154-residue protein sequence, read N- to C-terminus: Endoribonuclease YbeY (154 aa).

H118, H122, and H128 together coordinate Zn(2+).

Belongs to the endoribonuclease YbeY family. The cofactor is Zn(2+).

It is found in the cytoplasm. In terms of biological role, single strand-specific metallo-endoribonuclease involved in late-stage 70S ribosome quality control and in maturation of the 3' terminus of the 16S rRNA. The protein is Endoribonuclease YbeY of Macrococcus caseolyticus (strain JCSC5402) (Macrococcoides caseolyticum).